Consider the following 288-residue polypeptide: Lipoyl synthase (288 aa).

7 residues coordinate [4Fe-4S] cluster: C39, C44, C50, C65, C69, C72, and S276. One can recognise a Radical SAM core domain in the interval 51–265 (WGKGTATFMI…KETGLKKGFE (215 aa)).

Belongs to the radical SAM superfamily. Lipoyl synthase family. [4Fe-4S] cluster is required as a cofactor.

It localises to the cytoplasm. The enzyme catalyses [[Fe-S] cluster scaffold protein carrying a second [4Fe-4S](2+) cluster] + N(6)-octanoyl-L-lysyl-[protein] + 2 oxidized [2Fe-2S]-[ferredoxin] + 2 S-adenosyl-L-methionine + 4 H(+) = [[Fe-S] cluster scaffold protein] + N(6)-[(R)-dihydrolipoyl]-L-lysyl-[protein] + 4 Fe(3+) + 2 hydrogen sulfide + 2 5'-deoxyadenosine + 2 L-methionine + 2 reduced [2Fe-2S]-[ferredoxin]. It functions in the pathway protein modification; protein lipoylation via endogenous pathway; protein N(6)-(lipoyl)lysine from octanoyl-[acyl-carrier-protein]: step 2/2. Its function is as follows. Catalyzes the radical-mediated insertion of two sulfur atoms into the C-6 and C-8 positions of the octanoyl moiety bound to the lipoyl domains of lipoate-dependent enzymes, thereby converting the octanoylated domains into lipoylated derivatives. The protein is Lipoyl synthase of Bacteroides fragilis (strain YCH46).